The primary structure comprises 257 residues: Nickel import system ATP-binding protein NikD (257 aa).

Residues 4–245 form the ABC transporter domain; sequence IDIQNLTIKN…HLHPYTERLI (242 aa). Position 37–44 (37–44) interacts with ATP; sequence GESGAGKS.

This sequence belongs to the ABC transporter superfamily. As to quaternary structure, the complex is composed of two ATP-binding proteins (NikD and NikE), two transmembrane proteins (NikB and NikC) and a solute-binding protein (NikA).

The protein resides in the cell membrane. The enzyme catalyses Ni(2+)(out) + ATP + H2O = Ni(2+)(in) + ADP + phosphate + H(+). Functionally, part of the ABC transporter complex NikABCDE (Opp2) involved in nickel import. Probably responsible for energy coupling to the transport system. This is Nickel import system ATP-binding protein NikD from Staphylococcus aureus (strain MW2).